Consider the following 213-residue polypeptide: MKHDSFIAREGIPFIIAFGLTTLLAVFFLEQSWIAVLPLTATLFTCWFFRNPERHTPEGEKLIVSPADGKVIRIDEDFHHEMLSQPCSKVSIFMNVFNVHVNRVPYSGKVTKISYSPGRFLSANLDKASEQNERNAILVRTSDGKEIMTIQIAGLIARRIVCWVREEDVVKRGERFGMIRFGSRLEVFMPKETKILVTVGEKVKAGESPLGTF.

Catalysis depends on Ser183, which acts as the Schiff-base intermediate with substrate; via pyruvic acid. Ser183 is subject to Pyruvic acid (Ser); by autocatalysis.

This sequence belongs to the phosphatidylserine decarboxylase family. PSD-A subfamily. Heterodimer of a large membrane-associated beta subunit and a small pyruvoyl-containing alpha subunit. Pyruvate serves as cofactor. Post-translationally, is synthesized initially as an inactive proenzyme. Formation of the active enzyme involves a self-maturation process in which the active site pyruvoyl group is generated from an internal serine residue via an autocatalytic post-translational modification. Two non-identical subunits are generated from the proenzyme in this reaction, and the pyruvate is formed at the N-terminus of the alpha chain, which is derived from the carboxyl end of the proenzyme. The post-translation cleavage follows an unusual pathway, termed non-hydrolytic serinolysis, in which the side chain hydroxyl group of the serine supplies its oxygen atom to form the C-terminus of the beta chain, while the remainder of the serine residue undergoes an oxidative deamination to produce ammonia and the pyruvoyl prosthetic group on the alpha chain.

The protein resides in the cell membrane. The enzyme catalyses a 1,2-diacyl-sn-glycero-3-phospho-L-serine + H(+) = a 1,2-diacyl-sn-glycero-3-phosphoethanolamine + CO2. It functions in the pathway phospholipid metabolism; phosphatidylethanolamine biosynthesis; phosphatidylethanolamine from CDP-diacylglycerol: step 2/2. Functionally, catalyzes the formation of phosphatidylethanolamine (PtdEtn) from phosphatidylserine (PtdSer). This chain is Phosphatidylserine decarboxylase proenzyme, found in Syntrophus aciditrophicus (strain SB).